Here is a 246-residue protein sequence, read N- to C-terminus: Transmembrane and ubiquitin-like domain-containing protein 1 (246 aa).

A required to release iHOPS from membranes region spans residues 2 to 30; that stretch reads ALIEGVGDEVTILFSALACLLVLALAWVS. A helical membrane pass occupies residues 11–31; the sequence is VTILFSALACLLVLALAWVST. Positions 35 to 102 are disordered; sequence EGADPLPQPS…PPPPDSPQEP (68 aa). The span at 40–50 shows a compositional bias: pro residues; the sequence is LPQPSGTPTPT. A phosphothreonine mark is found at T71 and T92. S98 and S127 each carry phosphoserine. One can recognise a Ubiquitin-like domain in the interval 103 to 176; the sequence is LVLRLKFLND…LHCHVSTRVG (74 aa). 2 helical membrane passes run 195–215 and 221–241; these read VGSL…YCQI and FPLT…LLAF.

As to quaternary structure, interacts with EEF1A1, GRIA2, GRIP1, CAMLG, TUBG1. Interacts with NPM1 and CDKN2A; TMUB1 can enhance interaction between NPM1 and CDKN2A and is proposed to bridge the proteins; proposed to be mediated by iHOPS. Interacts with ERLIN2 and AMFR; TMUB1 promotes the interaction of ERLIN2 with AMFR. In terms of processing, processed by regulated intramembrane proteolysis (RIP) in the N-terminus to release iHOPS from membranes.

It is found in the membrane. The protein localises to the postsynaptic cell membrane. It localises to the recycling endosome. The protein resides in the cytoplasm. Its subcellular location is the nucleus. It is found in the nucleolus. The protein localises to the cytoskeleton. It localises to the microtubule organizing center. The protein resides in the centrosome. Its function is as follows. Involved in sterol-regulated ubiquitination and degradation of HMG-CoA reductase HMGCR. Involved in positive regulation of AMPA-selective glutamate receptor GRIA2 recycling to the cell surface. Acts as negative regulator of hepatocyte growth during regeneration. Functionally, may contribute to the regulation of translation during cell-cycle progression. May contribute to the regulation of cell proliferation. May be involved in centrosome assembly. Modulates stabilization and nucleolar localization of tumor suppressor CDKN2A and enhances association between CDKN2A and NPM1. In Bos taurus (Bovine), this protein is Transmembrane and ubiquitin-like domain-containing protein 1 (TMUB1).